Consider the following 376-residue polypeptide: UDP-4-amino-4,6-dideoxy-N-acetyl-beta-L-altrosamine transaminase (376 aa).

Substrate-binding positions include tyrosine 4, 24–27 (EILT), alanine 54, and serine 176. At lysine 181 the chain carries N6-(pyridoxal phosphate)lysine. Substrate is bound by residues asparagine 226 and 311 to 314 (QVHY).

Belongs to the DegT/DnrJ/EryC1 family.

The enzyme catalyses UDP-4-amino-4,6-dideoxy-N-acetyl-beta-L-altrosamine + 2-oxoglutarate = UDP-2-acetamido-2,6-dideoxy-beta-L-arabino-hex-4-ulose + L-glutamate. In terms of biological role, catalyzes the second step in the biosynthesis of pseudaminic acid, a sialic-acid-like sugar that is used to modify flagellin. Uses UDP-2-acetamido-2,6-dideoxy-beta-L-arabino-4-hexulose as substrate producing UDP-4-amino-4,6-dideoxy-beta-L-AltNAc. The protein is UDP-4-amino-4,6-dideoxy-N-acetyl-beta-L-altrosamine transaminase (pseC) of Campylobacter jejuni subsp. jejuni serotype O:2 (strain ATCC 700819 / NCTC 11168).